A 296-amino-acid polypeptide reads, in one-letter code: MLLGSHVSMSGKKMLEGSAIEAHEYGETTFMIYTGAPQNTRRKSIEDLNITKGHEVMEKYGLSNIVVHAPYIINIANTTKPETFNLGVDFLQQEIERTQAIGAKDIVLHPGAHVGAGVDAGINKIIEGLNEVLTNDNNVRIALETMAGKGTEIGRSFEELARIIDGVHNNERLSVCFDTCHTHDAGYNVKEDFDGVLNEFDKIIGVDRIKVVHVNDSKNDRGAQKDRHENIGFGYIGFDALNYIVHHDSFKDIPKILETPYVGEDKKNKKPPYKLEIEMLKQQQFDPELKNKVMQQ.

The Zn(2+) site is built by histidine 68, histidine 109, glutamate 144, aspartate 178, histidine 181, histidine 213, aspartate 226, histidine 228, and glutamate 258.

The protein belongs to the AP endonuclease 2 family. It depends on Zn(2+) as a cofactor.

It catalyses the reaction Endonucleolytic cleavage to 5'-phosphooligonucleotide end-products.. Endonuclease IV plays a role in DNA repair. It cleaves phosphodiester bonds at apurinic or apyrimidinic (AP) sites, generating a 3'-hydroxyl group and a 5'-terminal sugar phosphate. The protein is Probable endonuclease 4 of Staphylococcus aureus (strain NCTC 8325 / PS 47).